The primary structure comprises 269 residues: Zinc transporter ZupT (269 aa).

The next 8 helical transmembrane spans lie at 11-31 (IALA…LLVL), 40-60 (LLAF…LSEI), 80-100 (YGTL…HFIP), 125-145 (ALLT…ATFF), 158-178 (AFAI…PVYF), 187-207 (FSAS…GYWL), 217-237 (FGWV…DELL), and 249-269 (TVYG…LFKW). The Fe(2+) site is built by asparagine 136 and glutamate 139. Glutamate 139 and histidine 164 together coordinate Zn(2+). Positions 165, 168, and 197 each coordinate Fe(2+). Glutamate 168 contacts Zn(2+).

This sequence belongs to the ZIP transporter (TC 2.A.5) family. ZupT subfamily.

It is found in the cell inner membrane. The enzyme catalyses Zn(2+)(in) = Zn(2+)(out). Functionally, mediates zinc uptake. May also transport other divalent cations. This Stenotrophomonas maltophilia (strain K279a) protein is Zinc transporter ZupT.